We begin with the raw amino-acid sequence, 107 residues long: Thioredoxin (107 aa).

Positions serine 2 to serine 107 constitute a Thioredoxin domain. Catalysis depends on nucleophile residues cysteine 31 and cysteine 34. The cysteines at positions 31 and 34 are disulfide-linked.

The protein belongs to the thioredoxin family.

The protein resides in the plastid. The protein localises to the chloroplast. Functionally, participates in various redox reactions through the reversible oxidation of its active center dithiol to a disulfide and catalyzes dithiol-disulfide exchange reactions. The polypeptide is Thioredoxin (trxA) (Porphyra purpurea (Red seaweed)).